The chain runs to 366 residues: ERCC4 domain-containing protein EP364R (366 aa).

One can recognise an ERCC4 domain in the interval 3–101; that stretch reads FLVADHREHH…QLYFFVEGPA (99 aa).

This sequence belongs to the asfivirus EP364R family.

Its function is as follows. Plays a role in the inhibition of type I interferon signaling pathway. Mechanistically, specifically interacts with 2',3'-cGAMP and cleaves it via its phosphodiesterase activity. In turn, prevents 2',3'-cGAMP interaction with host ER-resident STING1 leading to inhibition of downstream signaling pathway and type I interferon production. This African swine fever virus (isolate Pig/Kenya/KEN-50/1950) (ASFV) protein is ERCC4 domain-containing protein EP364R.